The primary structure comprises 249 residues: Ciliogenesis and planar polarity effector 2 (249 aa).

The small GTPase-like stretch occupies residues 46 to 249 (PADVAAYKVF…VIAGLVGGAE (204 aa)). Residues 58 to 65 (GKSGVGKT) and 171 to 174 (TKLD) contribute to the GTP site.

The protein belongs to the small GTPase superfamily. Rab family. In terms of assembly, interacts with fuz.

It localises to the cytoplasm. It is found in the cytoskeleton. Its subcellular location is the cilium basal body. Functionally, potential effector of the planar cell polarity signaling pathway. Plays a role in targeted membrane trafficking most probably at the level of vesicle fusion with membranes. Involved in cilium biogenesis by regulating the transport of cargo proteins to the basal body and to the apical tips of cilia. More generally involved in exocytosis in secretory cells. The polypeptide is Ciliogenesis and planar polarity effector 2 (Xenopus laevis (African clawed frog)).